Reading from the N-terminus, the 149-residue chain is MEKTFIMLKPDAVQRGLVGQIIARFETKGCKLVGMKLMSVDQALAEQHYAEHKGKSFFEPTVQYIMSSPVVAMVWEGKNVVALARELMGATNPANANPGSIRGSFGMDISRNVIHGSDSVASAEREIALYFRPEELCDYRKAGEEWLSE.

Positions 9, 57, 85, 91, 102, and 112 each coordinate ATP. His115 functions as the Pros-phosphohistidine intermediate in the catalytic mechanism.

It belongs to the NDK family. As to quaternary structure, homotetramer. Requires Mg(2+) as cofactor.

It is found in the cytoplasm. It catalyses the reaction a 2'-deoxyribonucleoside 5'-diphosphate + ATP = a 2'-deoxyribonucleoside 5'-triphosphate + ADP. The catalysed reaction is a ribonucleoside 5'-diphosphate + ATP = a ribonucleoside 5'-triphosphate + ADP. Its function is as follows. Major role in the synthesis of nucleoside triphosphates other than ATP. The ATP gamma phosphate is transferred to the NDP beta phosphate via a ping-pong mechanism, using a phosphorylated active-site intermediate. The chain is Nucleoside diphosphate kinase from Desulfitobacterium hafniense (strain Y51).